The sequence spans 156 residues: Small ribosomal subunit protein uS7 (156 aa).

Belongs to the universal ribosomal protein uS7 family. Part of the 30S ribosomal subunit. Contacts proteins S9 and S11.

Functionally, one of the primary rRNA binding proteins, it binds directly to 16S rRNA where it nucleates assembly of the head domain of the 30S subunit. Is located at the subunit interface close to the decoding center, probably blocks exit of the E-site tRNA. The polypeptide is Small ribosomal subunit protein uS7 (Streptococcus suis (strain 98HAH33)).